The chain runs to 129 residues: Small ribosomal subunit protein uS11 (129 aa).

The protein belongs to the universal ribosomal protein uS11 family. In terms of assembly, part of the 30S ribosomal subunit. Interacts with proteins S7 and S18. Binds to IF-3.

In terms of biological role, located on the platform of the 30S subunit, it bridges several disparate RNA helices of the 16S rRNA. Forms part of the Shine-Dalgarno cleft in the 70S ribosome. The polypeptide is Small ribosomal subunit protein uS11 (Hydrogenovibrio crunogenus (strain DSM 25203 / XCL-2) (Thiomicrospira crunogena)).